The sequence spans 238 residues: Ribonuclease PH (238 aa).

Phosphate is bound by residues Arg86 and 124–126 (GTR).

This sequence belongs to the RNase PH family. Homohexameric ring arranged as a trimer of dimers.

It catalyses the reaction tRNA(n+1) + phosphate = tRNA(n) + a ribonucleoside 5'-diphosphate. Its function is as follows. Phosphorolytic 3'-5' exoribonuclease that plays an important role in tRNA 3'-end maturation. Removes nucleotide residues following the 3'-CCA terminus of tRNAs; can also add nucleotides to the ends of RNA molecules by using nucleoside diphosphates as substrates, but this may not be physiologically important. Probably plays a role in initiation of 16S rRNA degradation (leading to ribosome degradation) during starvation. The polypeptide is Ribonuclease PH (Maricaulis maris (strain MCS10) (Caulobacter maris)).